Consider the following 220-residue polypeptide: DNA-directed RNA polymerase subunit alpha (220 aa).

The protein belongs to the RNA polymerase alpha chain family. As to quaternary structure, in plastids the minimal PEP RNA polymerase catalytic core is composed of four subunits: alpha, beta, beta', and beta''. When a (nuclear-encoded) sigma factor is associated with the core the holoenzyme is formed, which can initiate transcription.

It is found in the plastid. The catalysed reaction is RNA(n) + a ribonucleoside 5'-triphosphate = RNA(n+1) + diphosphate. In terms of biological role, DNA-dependent RNA polymerase catalyzes the transcription of DNA into RNA using the four ribonucleoside triphosphates as substrates. This chain is DNA-directed RNA polymerase subunit alpha (rpoA), found in Euglena longa (Euglenophycean alga).